Reading from the N-terminus, the 31-residue chain is Photosystem II reaction center protein T (31 aa).

The helical transmembrane segment at 3–23 threads the bilayer; it reads SVAYIVVLTMALAVLFFAIAF.

The protein belongs to the PsbT family. As to quaternary structure, PSII is composed of 1 copy each of membrane proteins PsbA, PsbB, PsbC, PsbD, PsbE, PsbF, PsbH, PsbI, PsbJ, PsbK, PsbL, PsbM, PsbT, PsbX, PsbY, PsbZ, Psb30/Ycf12, peripheral proteins PsbO, CyanoQ (PsbQ), PsbU, PsbV and a large number of cofactors. It forms dimeric complexes.

The protein resides in the cellular thylakoid membrane. Functionally, found at the monomer-monomer interface of the photosystem II (PS II) dimer, plays a role in assembly and dimerization of PSII. PSII is a light-driven water plastoquinone oxidoreductase, using light energy to abstract electrons from H(2)O, generating a proton gradient subsequently used for ATP formation. The protein is Photosystem II reaction center protein T of Crocosphaera subtropica (strain ATCC 51142 / BH68) (Cyanothece sp. (strain ATCC 51142)).